Consider the following 107-residue polypeptide: Thiosulfate sulfurtransferase GlpE (107 aa).

Positions 17–105 (RQGEAVLVDI…WLKAFPLETE (89 aa)) constitute a Rhodanese domain. The active-site Cysteine persulfide intermediate is Cys65.

It belongs to the GlpE family.

Its subcellular location is the cytoplasm. The enzyme catalyses thiosulfate + hydrogen cyanide = thiocyanate + sulfite + 2 H(+). It carries out the reaction thiosulfate + [thioredoxin]-dithiol = [thioredoxin]-disulfide + hydrogen sulfide + sulfite + 2 H(+). Transferase that catalyzes the transfer of sulfur from thiosulfate to thiophilic acceptors such as cyanide or dithiols. May function in a CysM-independent thiosulfate assimilation pathway by catalyzing the conversion of thiosulfate to sulfite, which can then be used for L-cysteine biosynthesis. This chain is Thiosulfate sulfurtransferase GlpE, found in Sodalis glossinidius (strain morsitans).